A 321-amino-acid polypeptide reads, in one-letter code: Sphingolipid delta(4)-desaturase DES1 (321 aa).

The next 6 membrane-spanning stretches (helical) occupy residues 41 to 61 (PNFK…LFVV), 68 to 88 (WLIV…MLAV), 107 to 127 (ILGF…FKKY), 157 to 177 (FGKF…PLII), 187 to 206 (IINT…FLGW), and 208 to 230 (PLAY…GHFI).

This sequence belongs to the fatty acid desaturase type 1 family. DEGS subfamily. As to expression, testes.

The protein localises to the endoplasmic reticulum membrane. It is found in the membrane. It localises to the mitochondrion. The enzyme catalyses an N-acylsphinganine + 2 Fe(II)-[cytochrome b5] + O2 + 2 H(+) = an N-acylsphing-4-enine + 2 Fe(III)-[cytochrome b5] + 2 H2O. The catalysed reaction is an N-acyleicosasphinganine + 2 Fe(II)-[cytochrome b5] + O2 + 2 H(+) = an N-acyleicosasphing-4-enine + 2 Fe(III)-[cytochrome b5] + 2 H2O. It functions in the pathway sphingolipid metabolism. In terms of biological role, has sphingolipid-delta-4-desaturase activity. Converts sphinganine-containing sphingolipids (such as N-acylsphinganines or dihydroceramides) into sphingolipids containing the delta-4-desaturated sphingoid base (E)-sphing-4-enine (such as N-acylsphing-4-enines or ceramides), which are required for many different functions (structural functions as well as signaling). Required to initiate spermatid differentiation among other signals. Required for central spindle assembly and cytokinesis during male meiosis, may act as part of an anchoring mechanism that links membrane-bounded cellular compartments to components of the cytoskeleton. The protein is Sphingolipid delta(4)-desaturase DES1 of Drosophila melanogaster (Fruit fly).